The sequence spans 87 residues: Alpha-toxin To2 (87 aa).

Residues 1–20 (MIRFVLFISCFFLIGTVVEC) form the signal peptide. The LCN-type CS-alpha/beta domain maps to 22–84 (KDGYLMEGDG…IWDSKNNKCG (63 aa)). Disulfide bonds link C32–C83, C36–C58, C44–C64, and C48–C66. K85 is modified (lysine amide).

In terms of tissue distribution, expressed by the venom gland.

It localises to the secreted. Functionally, alpha toxins bind voltage-independently at site-3 of sodium channels (Nav) and inhibit the inactivation of the activated channels, thereby blocking neuronal transmission. Affects the tetrodotoxin-sensitive sodium current permeability of F-11 rat neuroblastoma cells. Produces a dose dependent increase in amplitude and duration of the current. The sequence is that of Alpha-toxin To2 from Tityus obscurus (Amazonian scorpion).